A 276-amino-acid polypeptide reads, in one-letter code: NH(3)-dependent NAD(+) synthetase (276 aa).

Residue 43–50 (GISGGVDS) participates in ATP binding. Residue D49 participates in Mg(2+) binding. R146 is a deamido-NAD(+) binding site. T166 contributes to the ATP binding site. E171 contributes to the Mg(2+) binding site. The deamido-NAD(+) site is built by K179 and D186. The ATP site is built by K195 and T217. Residue 266–267 (HK) participates in deamido-NAD(+) binding.

It belongs to the NAD synthetase family. In terms of assembly, homodimer.

It carries out the reaction deamido-NAD(+) + NH4(+) + ATP = AMP + diphosphate + NAD(+) + H(+). Its pathway is cofactor biosynthesis; NAD(+) biosynthesis; NAD(+) from deamido-NAD(+) (ammonia route): step 1/1. In terms of biological role, catalyzes the ATP-dependent amidation of deamido-NAD to form NAD. Uses ammonia as a nitrogen source. The protein is NH(3)-dependent NAD(+) synthetase of Psychromonas ingrahamii (strain DSM 17664 / CCUG 51855 / 37).